A 144-amino-acid polypeptide reads, in one-letter code: Large ribosomal subunit protein uL15 (144 aa).

Positions 1 to 54 (MRLNTLSPAEGSKKAGKRLGRGIGSGLGKTGGRGHKGQKSRSGGGVRRGFEGGQ) are disordered. Gly residues predominate over residues 21–31 (RGIGSGLGKTG).

Belongs to the universal ribosomal protein uL15 family. As to quaternary structure, part of the 50S ribosomal subunit.

In terms of biological role, binds to the 23S rRNA. The protein is Large ribosomal subunit protein uL15 of Escherichia coli (strain K12 / MC4100 / BW2952).